A 295-amino-acid polypeptide reads, in one-letter code: MAEIHTMHNTKAGRVFDVCNILFLGGVGAITILPFLYIIAGSFATEAELAQRSFFIFPKTFTLDAYKYVFSTPTFLRSMGVSIFITVVGTAVQLFFTFTMAYPLAKRHVKGRNLLLNLVIFSMLFSGGMIPTYLVVKSLGLLDTYWALILPMAINPFNLIIIKNFFQQLPRELEESAKIDGCSEIGVFWRIALPLSKPVIATFALFYAVGIWNDFFHALLYINDSAKWPLQMVLRQVTILSDLTATNGDTMQNAVPPEQGIKLAVIVIATLPILAVYPFLQKHFAKGMLIGSVKG.

A run of 6 helical transmembrane segments spans residues 21–41 (ILFLGGVGAITILPFLYIIAG), 81–101 (VSIFITVVGTAVQLFFTFTMA), 116–136 (LNLVIFSMLFSGGMIPTYLVV), 142–162 (LDTYWALILPMAINPFNLIII), 199–219 (VIATFALFYAVGIWNDFFHAL), and 260–280 (GIKLAVIVIATLPILAVYPFL). The ABC transmembrane type-1 domain maps to 79-280 (MGVSIFITVV…LPILAVYPFL (202 aa)).

Belongs to the binding-protein-dependent transport system permease family. CysTW subfamily.

It localises to the cell membrane. This is Protein LplC (lplC) from Bacillus subtilis (strain 168).